A 744-amino-acid polypeptide reads, in one-letter code: Integrator complex subunit 11 homolog (744 aa).

Zn(2+) contacts are provided by H67, H69, D71, H72, H156, and D177. The HXHXDH motif motif lies at 67–72 (HFHLDH). Residue E202 is part of the active site. Zn(2+) is bound at residue H425. A disordered region spans residues 626 to 669 (NNNTSDDNNNNNNNNNNNNNNNNNNNNNNNNNNNNNNNNNNNNN).

This sequence belongs to the metallo-beta-lactamase superfamily. RNA-metabolizing metallo-beta-lactamase-like family. INTS11 subfamily. As to quaternary structure, component of the Integrator complex. The core complex associates with protein phosphatase 2A subunits, to form the Integrator-PP2A (INTAC) complex. Requires Zn(2+) as cofactor.

The protein resides in the nucleus. Its subcellular location is the cytoplasm. RNA endonuclease component of the integrator complex, a multiprotein complex that terminates RNA polymerase II (Pol II) transcription in the promoter-proximal region of genes. The integrator complex provides a quality checkpoint during transcription elongation by driving premature transcription termination of transcripts that are unfavorably configured for transcriptional elongation: the complex terminates transcription by (1) catalyzing dephosphorylation of the C-terminal domain (CTD) of Pol II subunit polr2a, (2) degrading the exiting nascent RNA transcript via endonuclease activity and (3) promoting the release of Pol II from bound DNA. The integrator complex is also involved in terminating the synthesis of non-coding Pol II transcripts, such as enhancer RNAs (eRNAs), small nuclear RNAs (snRNAs), telomerase RNAs and long non-coding RNAs (lncRNAs). Within the integrator complex, INTS11 constitutes the RNA endonuclease subunit that degrades exiting nascent RNA transcripts. In Dictyostelium discoideum (Social amoeba), this protein is Integrator complex subunit 11 homolog (ints11).